The primary structure comprises 364 residues: MKALILVGGFGTRLRPLTLTMPKPLVEFGNKRMILHQIEALAAAGVTDIVLAVNYRPEIMEKYLAEYEKQFGINITISIESEPLGTAGPLKLAEDVLRKDDTPFFVLNSDVTCEYPFKELAAFHKAHGDEGTIVVTKVEEPSKYGVVVHKPNHPSRIDRFVEKPVQFVGNRINAGLYIFNPSVIDRVELRPTSIEQETFPAMVRDGQLHSFDLEGFWMDIGQPKDFLTGTCLYLSSLTKKGSKELAPTTLPYIHGGNVLIDPSAKIGKNCRIGPNVTIGPNVVVGDGVRLQRCVLLEGSKVKDHAWVKSTIVGWNSTVGKWARLENVTVLGDDVTIGDEIYVNGGSILPHKTIKANVDVPAIIM.

The protein belongs to the transferase hexapeptide repeat family.

Its subcellular location is the cytoplasm. The catalysed reaction is alpha-D-mannose 1-phosphate + GTP + H(+) = GDP-alpha-D-mannose + diphosphate. Its pathway is nucleotide-sugar biosynthesis; GDP-alpha-D-mannose biosynthesis; GDP-alpha-D-mannose from alpha-D-mannose 1-phosphate (GTP route): step 1/1. In terms of biological role, involved in cell wall synthesis where it is required for glycosylation. Involved in cell cycle progression through cell-size checkpoint. This Neurospora crassa (strain ATCC 24698 / 74-OR23-1A / CBS 708.71 / DSM 1257 / FGSC 987) protein is Mannose-1-phosphate guanyltransferase (mpg-1).